The chain runs to 596 residues: Elongation factor 4 (596 aa).

The tr-type G domain occupies 2–184; that stretch reads KHIRNFSIIA…VIVDQIPPPE (183 aa). Residues 14–19 and 131–134 each bind GTP; these read DHGKST and NKID.

This sequence belongs to the TRAFAC class translation factor GTPase superfamily. Classic translation factor GTPase family. LepA subfamily.

Its subcellular location is the cell inner membrane. The enzyme catalyses GTP + H2O = GDP + phosphate + H(+). Required for accurate and efficient protein synthesis under certain stress conditions. May act as a fidelity factor of the translation reaction, by catalyzing a one-codon backward translocation of tRNAs on improperly translocated ribosomes. Back-translocation proceeds from a post-translocation (POST) complex to a pre-translocation (PRE) complex, thus giving elongation factor G a second chance to translocate the tRNAs correctly. Binds to ribosomes in a GTP-dependent manner. The sequence is that of Elongation factor 4 from Shewanella sp. (strain ANA-3).